A 323-amino-acid polypeptide reads, in one-letter code: Sphingolipid delta(4)-desaturase DES1 (323 aa).

The next 2 membrane-spanning stretches (helical) occupy residues 41–61 (HNLI…FYLV) and 68–88 (WLLF…TLAI). A Histidine box-1 motif is present at residues 89 to 93 (HEISH). The chain crosses the membrane as a helical span at residues 104-124 (WNRCFGMFANLPLGLPYSVSF). The Histidine box-2 motif lies at 128 to 132 (HMDHH). 3 helical membrane-spanning segments follow: residues 152–172 (FFCT…FYTI), 185–205 (LEII…YTLG), and 210–230 (FYML…GHFI). Positions 259–263 (HNEHH) match the Histidine box-3 motif.

The protein belongs to the fatty acid desaturase type 1 family. DEGS subfamily. In terms of assembly, interacts with RLBP1; the interaction increases synthesis of chromophore-precursors by DEGS1.

The protein resides in the endoplasmic reticulum membrane. The catalysed reaction is an N-acylsphinganine + 2 Fe(II)-[cytochrome b5] + O2 + 2 H(+) = an N-acylsphing-4-enine + 2 Fe(III)-[cytochrome b5] + 2 H2O. It catalyses the reaction all-trans-retinol = 11-cis-retinol. It carries out the reaction all-trans-retinol = 9-cis-retinol. The enzyme catalyses all-trans-retinol = 13-cis-retinol. The catalysed reaction is 11-cis-retinol = 13-cis-retinol. It catalyses the reaction 11-cis-retinol = 9-cis-retinol. Its function is as follows. Has sphingolipid-delta-4-desaturase activity. Converts D-erythro-sphinganine to D-erythro-sphingosine (E-sphing-4-enine). Catalyzes the equilibrium isomerization of retinols. This chain is Sphingolipid delta(4)-desaturase DES1 (degs1), found in Xenopus tropicalis (Western clawed frog).